Here is a 363-residue protein sequence, read N- to C-terminus: Flagellar P-ring protein (363 aa).

Residues 1–20 (MKYKLVLAVAVLVFSLPSQA) form the signal peptide.

This sequence belongs to the FlgI family. As to quaternary structure, the basal body constitutes a major portion of the flagellar organelle and consists of four rings (L,P,S, and M) mounted on a central rod.

It is found in the periplasm. The protein localises to the bacterial flagellum basal body. In terms of biological role, assembles around the rod to form the L-ring and probably protects the motor/basal body from shearing forces during rotation. The polypeptide is Flagellar P-ring protein (Shewanella baltica (strain OS223)).